We begin with the raw amino-acid sequence, 164 residues long: V-type proton ATPase 16 kDa proteolipid subunit (164 aa).

Over 1-9 (MSNFAGDET) the chain is Lumenal. A helical transmembrane segment spans residues 10 to 32 (APFFGFLGAAAALVFSCMGAAYG). Residues 33–54 (TAKSGVGVASMGVMRPELVMKS) lie on the Cytoplasmic side of the membrane. The chain crosses the membrane as a helical span at residues 55-75 (IVPVVMAGVLGIYGLIIAVII). Topologically, residues 76–94 (STGINPKTKSYYLFDGYAH) are lumenal. Residues 95–116 (LSSGLACGLAGLSAGMAIGIVG) traverse the membrane as a helical segment. Topologically, residues 117-128 (DAGVRANAQQPK) are cytoplasmic. A helical membrane pass occupies residues 129-154 (LFVGMILILIFAEALALYGLIVGIIL). Over 155–164 (SSRAGQSRAE) the chain is Lumenal.

It belongs to the V-ATPase proteolipid subunit family. In terms of assembly, V-ATPase is a heteromultimeric enzyme composed of a peripheral catalytic V1 complex (main components: subunits A, B, C, D, E, and F) attached to an integral membrane V0 proton pore complex (main component: the proteolipid protein; which is present as a hexamer that forms the proton-conducting pore).

The protein resides in the vacuole membrane. In terms of biological role, proton-conducting pore forming subunit of the membrane integral V0 complex of vacuolar ATPase. V-ATPase is responsible for acidifying a variety of intracellular compartments in eukaryotic cells. This chain is V-type proton ATPase 16 kDa proteolipid subunit, found in Solanum lycopersicum (Tomato).